The following is a 1406-amino-acid chain: Inactive tyrosine-protein kinase PRAG1 (1406 aa).

Ser-148 bears the Phosphoserine mark. Residues 184-193 show a composition bias toward basic and acidic residues; that stretch reads EEKAVHKEKP. Disordered regions lie at residues 184–205 and 217–248; these read EEKA…STQE and TTSG…SGDS. Phosphotyrosine is present on residues Tyr-253, Tyr-365, and Tyr-413. Disordered regions lie at residues 372 to 470 and 484 to 854; these read PAPE…TPQV and DHRT…HSET. Over residues 526 to 542 the composition is skewed to basic and acidic residues; that stretch reads RESHAHSASESKPKERP. Over residues 546–576 the composition is skewed to low complexity; sequence PKLSKSSPVGSPVSPSAGGPPVSPLADLSDG. Polar residues-rich tracts occupy residues 660 to 671 and 678 to 695; these read NGPTDHSNSTTW and DGSS…SKSA. Residues Ser-696 and Ser-745 each carry the phosphoserine modification. 2 stretches are compositionally biased toward polar residues: residues 737–746 and 754–770; these read SQGSAESLSP and SFTT…SRTC. A Phosphoserine modification is found at Ser-782. Polar residues predominate over residues 798 to 808; that stretch reads SGSTEDVSPSG. Ser-826 is subject to Phosphoserine. Residues 933-976 form a required for homodimerization region; sequence STQLQLHGLLSNISSKEGTYAKLGGLYTQSLARLVAKCEDLFMG. The Protein kinase domain occupies 978–1329; that stretch reads QKKELHFNEN…EAKRVLQCLL (352 aa). Pro residues predominate over residues 1163-1173; sequence GPAPAPAPAPA. Residues 1163 to 1206 are disordered; sequence GPAPAPAPAPAPAAAAPPCSSAAPPAGGTLSPAAGPASPEGPRE. Residues 1174–1202 are compositionally biased toward low complexity; it reads PAAAAPPCSSAAPPAGGTLSPAAGPASPE. The interval 1331–1406 is required for homodimerization; sequence GPRRELVQQP…LQSLKLLQLL (76 aa).

This sequence belongs to the protein kinase superfamily. In terms of assembly, homodimer. Dimerization leads to the catalytic activation of CSK. Interacts (via C-terminus) with RND2. Interacts with CSK (via SH2 domain) in a Tyr-413 phosphorylation-dependent manner; this interaction potentiates kinase activity of CSK. Interacts with PEAK1. Interacts with NOTCH1 intracellular domain (N1ICD). Forms a complex with N1ICD and MAML1, in a MAML1-dependent manner. Phosphorylated by CSK on Tyr-253, Tyr-365, and Tyr-413; Tyr-413 is a primary site of phosphorylation.

The protein resides in the cytoplasm. It is found in the cell junction. It localises to the focal adhesion. Its subcellular location is the nucleus. Catalytically inactive protein kinase that acts as a scaffold protein. Functions as an effector of the small GTPase RND2, which stimulates RhoA activity and inhibits NGF-induced neurite outgrowth. Promotes Src family kinase (SFK) signaling by regulating the subcellular localization of CSK, a negative regulator of these kinases, leading to the regulation of cell morphology and motility by a CSK-dependent mechanism. Acts as a critical coactivator of Notch signaling. This chain is Inactive tyrosine-protein kinase PRAG1, found in Homo sapiens (Human).